Reading from the N-terminus, the 376-residue chain is MAKNYDSVEFPYCDEVSKYERLAKIGQGTFGEVFKAKHRQTGKKVALKKVLMENEKEGFPITALREIKILQLLKHENVVNLIEICRTKISPTANQYNRCKGTIFLVFDFCEHDLAGLLSNAHVKFTLSEIKKVMQMLLNGLYYIHRNKILHRDMKAANVLITRDGVLKLADFGLARAFSLAKNSQPNKYTNRVVTLWYRPPELLLGERDYGPPIDLWGAGCIMAEMWTRSPIMQGNTEQHQLTLISQLCGSITPEVWPNVDKYELYQKLELPKGQKRKVKERLKAYVKDLYALDLIDKLLVLDPAQRIDSDDALNHDFFWSDPMPSDLKNMLSTHNQSMFEYLAPPRRRGGHMPQQPANQARNPAATNQSEFDRVF.

The Protein kinase domain occupies 19–319 (YERLAKIGQG…SDDALNHDFF (301 aa)). ATP-binding positions include 25–33 (IGQGTFGEV) and K48. D153 serves as the catalytic Proton acceptor. The disordered stretch occupies residues 345 to 376 (PPRRRGGHMPQQPANQARNPAATNQSEFDRVF). The span at 354–369 (PQQPANQARNPAATNQ) shows a compositional bias: low complexity.

It belongs to the protein kinase superfamily. CMGC Ser/Thr protein kinase family. CDC2/CDKX subfamily. In terms of assembly, associates with cyclin-T to form P-TEFb.

The protein resides in the nucleus. The catalysed reaction is L-seryl-[protein] + ATP = O-phospho-L-seryl-[protein] + ADP + H(+). The enzyme catalyses L-threonyl-[protein] + ATP = O-phospho-L-threonyl-[protein] + ADP + H(+). It catalyses the reaction [DNA-directed RNA polymerase] + ATP = phospho-[DNA-directed RNA polymerase] + ADP + H(+). Its function is as follows. Member of the cyclin-dependent kinase pair (CDK9/cyclin-T) complex, also called positive transcription elongation factor B (P-TEFb), which is proposed to facilitate the transition from abortive to production elongation by phosphorylating the CTD (C-terminal domain) of the large subunit of RNA polymerase II (RNAP II) and SUPT5H. This is Cyclin-dependent kinase 9 (cdk9) from Xenopus tropicalis (Western clawed frog).